The chain runs to 237 residues: DCN1-like protein 5 (237 aa).

Phosphoserine is present on residues Ser9, Ser41, and Ser48. Positions 46 to 232 (FSSKKCLAWF…LLDEFVEWQK (187 aa)) constitute a DCUN1 domain.

In terms of assembly, part of a complex that contains DCUN1D5, CUL1 and RBX1; this interaction is bridged by CUL1. Interacts (via the DCUN1 domain) with the unneddylated cullins: interacts with CUL1, CUL2, CUL3, CUL4A, CUL4B and CUL5; these interactions promote the cullin neddylation and the identity of the cullin dictates the affinity of the interaction. Interacts (via DCUN1 domain) with UBE2M (N-terminally acetylated form) and probably with UBE2F (N-terminally acetylated form). May also interact with regulators or subunits of cullin-RING ligases such as RBX1, RNF7, ELOB and DDB1; these interactions are bridged by cullins. Interacts with CAND1; this interaction is bridged by cullins and strongly inhibits the neddylation of cullins. These CAND-cullin-DCNL complexes can only be neddylated in the presence of a substrate adapter. In terms of processing, phosphorylation at Ser-41 is independent of cullin's interaction. Phosphorylated in response to both TICAM1 and MYD88 dependent Toll-like receptor (TLR) pathway activation. Phosphorylated in response to IL1B stimulation.

The protein resides in the nucleus. Its subcellular location is the cytoplasm. It localises to the cytoskeleton. It is found in the spindle. Contributes to the neddylation of all cullins by transferring NEDD8 from N-terminally acetylated NEDD8-conjugating E2s enzyme to different cullin C-terminal domain-RBX complexes which is necessary for the activation of cullin-RING E3 ubiquitin ligases (CRLs). May play a role in DNA damage response and may participate in cell proliferation and anchorage-independent cell growth. This is DCN1-like protein 5 from Pongo abelii (Sumatran orangutan).